The sequence spans 261 residues: Immediate-early protein IE-0 (261 aa).

Residues 212 to 257 form an RING-type zinc finger; it reads CNVCKEISTDERFLKPKECCEYAICNACCVNMWKTATTHAKCPACR.

Interacts with proteins C42 and FP25. Interacts with host beta-tubulin. Interacts with Ac66 and vUb.

Its subcellular location is the host nucleus. It is found in the host cytoplasm. The protein resides in the virion. In terms of biological role, putative viral E3 ligase that plays an essential regulatory role in both viral DNA replication and transcriptional transactivation. The role in transcription has been shown to include activation of gene expression from early viral promoters. Also promotes the efficient egress of nucleocapsids from the host nucleus. May act as an E3 ligase that promotes ubiquitination of nucleocapsids proteins by vUbi and subsequent viral egress for the host nucleus. This is Immediate-early protein IE-0 (IE0) from Lepidoptera (butterflies and moths).